The chain runs to 880 residues: Alanine--tRNA ligase (880 aa).

Positions 567, 571, 669, and 673 each coordinate Zn(2+).

It belongs to the class-II aminoacyl-tRNA synthetase family. The cofactor is Zn(2+).

Its subcellular location is the cytoplasm. The catalysed reaction is tRNA(Ala) + L-alanine + ATP = L-alanyl-tRNA(Ala) + AMP + diphosphate. Catalyzes the attachment of alanine to tRNA(Ala) in a two-step reaction: alanine is first activated by ATP to form Ala-AMP and then transferred to the acceptor end of tRNA(Ala). Also edits incorrectly charged Ser-tRNA(Ala) and Gly-tRNA(Ala) via its editing domain. This chain is Alanine--tRNA ligase, found in Bacillus cytotoxicus (strain DSM 22905 / CIP 110041 / 391-98 / NVH 391-98).